We begin with the raw amino-acid sequence, 505 residues long: Probable cytosol aminopeptidase (505 aa).

Positions 269 and 274 each coordinate Mn(2+). The active site involves Lys-281. Asp-292, Asp-351, and Glu-353 together coordinate Mn(2+). Residue Arg-355 is part of the active site.

The protein belongs to the peptidase M17 family. It depends on Mn(2+) as a cofactor.

The protein resides in the cytoplasm. The catalysed reaction is Release of an N-terminal amino acid, Xaa-|-Yaa-, in which Xaa is preferably Leu, but may be other amino acids including Pro although not Arg or Lys, and Yaa may be Pro. Amino acid amides and methyl esters are also readily hydrolyzed, but rates on arylamides are exceedingly low.. It carries out the reaction Release of an N-terminal amino acid, preferentially leucine, but not glutamic or aspartic acids.. Presumably involved in the processing and regular turnover of intracellular proteins. Catalyzes the removal of unsubstituted N-terminal amino acids from various peptides. The polypeptide is Probable cytosol aminopeptidase (Rhodococcus opacus (strain B4)).